The sequence spans 125 residues: Ribosome-binding factor A (125 aa).

Belongs to the RbfA family. Monomer. Binds 30S ribosomal subunits, but not 50S ribosomal subunits or 70S ribosomes.

The protein localises to the cytoplasm. One of several proteins that assist in the late maturation steps of the functional core of the 30S ribosomal subunit. Associates with free 30S ribosomal subunits (but not with 30S subunits that are part of 70S ribosomes or polysomes). Required for efficient processing of 16S rRNA. May interact with the 5'-terminal helix region of 16S rRNA. In Xylella fastidiosa (strain M12), this protein is Ribosome-binding factor A.